The following is a 221-amino-acid chain: Large ribosomal subunit protein bL25 (221 aa).

The tract at residues 192-221 (APRVEKEETEEDTVAPGDVPAENSKDADEE) is disordered.

This sequence belongs to the bacterial ribosomal protein bL25 family. CTC subfamily. As to quaternary structure, part of the 50S ribosomal subunit; part of the 5S rRNA/L5/L18/L25 subcomplex. Contacts the 5S rRNA. Binds to the 5S rRNA independently of L5 and L18.

Its function is as follows. This is one of the proteins that binds to the 5S RNA in the ribosome where it forms part of the central protuberance. This is Large ribosomal subunit protein bL25 from Idiomarina loihiensis (strain ATCC BAA-735 / DSM 15497 / L2-TR).